A 171-amino-acid chain; its full sequence is Dual-action ribosomal maturation protein DarP (171 aa).

The interval 1–30 (MPKRPAENPEQSDDFVSKSQKKREMAERQE) is disordered.

The protein belongs to the DarP family.

Its subcellular location is the cytoplasm. Member of a network of 50S ribosomal subunit biogenesis factors which assembles along the 30S-50S interface, preventing incorrect 23S rRNA structures from forming. Promotes peptidyl transferase center (PTC) maturation. This is Dual-action ribosomal maturation protein DarP from Idiomarina loihiensis (strain ATCC BAA-735 / DSM 15497 / L2-TR).